Here is a 110-residue protein sequence, read N- to C-terminus: Small ribosomal subunit protein bS16 (110 aa).

The disordered stretch occupies residues 84–110 (KREARNNPEKAVPRKERKAAAEAAAKK).

The protein belongs to the bacterial ribosomal protein bS16 family.

The chain is Small ribosomal subunit protein bS16 from Rhodopseudomonas palustris (strain BisB18).